Reading from the N-terminus, the 481-residue chain is 3-isopropylmalate dehydratase large subunit (481 aa).

3 residues coordinate [4Fe-4S] cluster: cysteine 363, cysteine 423, and cysteine 426. A disordered region spans residues 437-463; it reads GQRAASTSNRNFEGRQGRGGRTHLVSP.

It belongs to the aconitase/IPM isomerase family. LeuC type 1 subfamily. Heterodimer of LeuC and LeuD. Requires [4Fe-4S] cluster as cofactor.

The enzyme catalyses (2R,3S)-3-isopropylmalate = (2S)-2-isopropylmalate. Its pathway is amino-acid biosynthesis; L-leucine biosynthesis; L-leucine from 3-methyl-2-oxobutanoate: step 2/4. Catalyzes the isomerization between 2-isopropylmalate and 3-isopropylmalate, via the formation of 2-isopropylmaleate. The sequence is that of 3-isopropylmalate dehydratase large subunit from Salinispora arenicola (strain CNS-205).